The following is a 271-amino-acid chain: Ribonuclease HII (271 aa).

In terms of domain architecture, RNase H type-2 spans 84–271 (VLIAGVDEVG…HRMSFLSNYI (188 aa)). Positions 90, 91, and 187 each coordinate a divalent metal cation.

The protein belongs to the RNase HII family. Requires Mn(2+) as cofactor. The cofactor is Mg(2+).

It localises to the cytoplasm. The catalysed reaction is Endonucleolytic cleavage to 5'-phosphomonoester.. In terms of biological role, endonuclease that specifically degrades the RNA of RNA-DNA hybrids. In Clostridium tetani (strain Massachusetts / E88), this protein is Ribonuclease HII.